We begin with the raw amino-acid sequence, 674 residues long: 1,4-alpha-glucan branching enzyme GlgB 1 (674 aa).

Asp-336 acts as the Nucleophile in catalysis. Glu-389 functions as the Proton donor in the catalytic mechanism.

The protein belongs to the glycosyl hydrolase 13 family. GlgB subfamily. Monomer.

The enzyme catalyses Transfers a segment of a (1-&gt;4)-alpha-D-glucan chain to a primary hydroxy group in a similar glucan chain.. It participates in glycan biosynthesis; glycogen biosynthesis. In terms of biological role, catalyzes the formation of the alpha-1,6-glucosidic linkages in glycogen by scission of a 1,4-alpha-linked oligosaccharide from growing alpha-1,4-glucan chains and the subsequent attachment of the oligosaccharide to the alpha-1,6 position. The protein is 1,4-alpha-glucan branching enzyme GlgB 1 (glgB1) of Clostridium perfringens (strain 13 / Type A).